A 189-amino-acid chain; its full sequence is Cancer/testis antigen family 45 member A2 (189 aa).

The protein belongs to the CT45 family. As to expression, testis specific. Expressed in cancer cell lines.

The chain is Cancer/testis antigen family 45 member A2 from Homo sapiens (Human).